Here is a 517-residue protein sequence, read N- to C-terminus: Crotonobetaine/carnitine--CoA ligase (517 aa).

It belongs to the ATP-dependent AMP-binding enzyme family.

It catalyses the reaction 4-(trimethylamino)butanoate + ATP + CoA = 4-(trimethylamino)butanoyl-CoA + AMP + diphosphate. It carries out the reaction crotonobetaine + ATP + CoA = crotonobetainyl-CoA + AMP + diphosphate. The catalysed reaction is (R)-carnitine + ATP + CoA = (R)-carnitinyl-CoA + AMP + diphosphate. It participates in amine and polyamine metabolism; carnitine metabolism. Catalyzes the transfer of CoA to carnitine, generating the initial carnitinyl-CoA needed for the CaiB reaction cycle. Also has activity toward crotonobetaine and gamma-butyrobetaine. The sequence is that of Crotonobetaine/carnitine--CoA ligase from Salmonella heidelberg (strain SL476).